Reading from the N-terminus, the 845-residue chain is Cadherin-related family member 5 (845 aa).

Residues 1–25 form the signal peptide; it reads MGSWALLWPPLLFTGLLVRPPGTMA. Over 26–669 the chain is Extracellular; that stretch reads QAQYCSVNKD…DKRFSVVDMA (644 aa). N-linked (GlcNAc...) asparagine glycosylation is found at Asn-44, Asn-81, Asn-140, Asn-198, Asn-297, Asn-308, and Asn-405. Cadherin domains lie at 71-124, 125-237, 249-354, and 355-459; these read FRIQ…APEF, PFKT…PPWF, IQAQ…PPRF, and PQRL…PPST. The segment at 452–661 is disordered; sequence SEQEPPSTDV…SSGGGPSEDK (210 aa). The span at 506 to 518 shows a compositional bias: low complexity; that stretch reads SGTTLRPPTSSTP. N-linked (GlcNAc...) asparagine glycosylation is present at Asn-526. Polar residues-rich tracts occupy residues 539-549, 556-594, and 602-611; these read TAQTPKPGTSQ, GTST…SHQP, and AQTPEAGTSQ. Tandem repeats lie at residues 540–570, 571–601, and 602–631. Positions 540–645 are 4 X 31 AA approximate tandem repeats; the sequence is AQTPKPGTSQ…PEPGTSQPMP (106 aa). A 4; truncated repeat occupies 632-645; sequence TAQTPEPGTSQPMP. Residues 633–652 show a composition bias toward low complexity; that stretch reads AQTPEPGTSQPMPLSKSTPS. Residues 670 to 690 form a helical membrane-spanning segment; it reads ALGGVLGALLLLALLGLAVLV. Over 691 to 845 the chain is Cytoplasmic; the sequence is HKHYGPRLKC…DAPGGDDSYI (155 aa). The mediates interaction with USH1C and MYO7B and is required for proper localization to microvilli tips and function in microvilli organization stretch occupies residues 691 to 845; that stretch reads HKHYGPRLKC…DAPGGDDSYI (155 aa). Positions 724-789 are disordered; it reads ANWAPVPSPT…KERRPEGGYK (66 aa). The span at 729–762 shows a compositional bias: pro residues; it reads VPSPTHDPKPAEAPMPAEPAPPGPASPGGAPEPP. Residue Ser-770 is modified to Phosphoserine. Thr-810 carries the phosphothreonine modification. The disordered stretch occupies residues 811–845; that stretch reads LDVDGASDSGSGDEGEGAGRGGGPYDAPGGDDSYI. 3 positions are modified to phosphoserine: Ser-817, Ser-819, and Ser-821. Low complexity predominate over residues 835–845; sequence YDAPGGDDSYI.

Part of the IMAC/intermicrovillar adhesion complex/intermicrovillar tip-link complex composed of ANKS4B, MYO7B, USH1C, CDHR2 and CDHR5. Interacts (via cytoplasmic domain) with USH1C and MYO7B; required for proper localization of CDHR5 to microvilli tips and its function in brush border differentiation. Post-translationally, N- and O-glycosylated. As to expression, highest expression in kidney, liver, colon and small intestine. In kidney, expressed apically along brush border of proximal convoluted tubule but not in cortical collecting ducts. Isoform 1 is expressed primarily in adult small intestine and colon. Isoform 2 is highly expressed in fetal liver. Expressed in duodenum with higher expression in enterocytes along the villus axis and lower expression in crypts (at protein level).

The protein localises to the apical cell membrane. It is found in the cell projection. It localises to the microvillus membrane. Its function is as follows. Intermicrovillar adhesion molecule that forms, via its extracellular domain, calcium-dependent heterophilic complexes with CDHR2 on adjacent microvilli. Thereby, controls the packing of microvilli at the apical membrane of epithelial cells. Through its cytoplasmic domain, interacts with microvillus cytoplasmic proteins to form the intermicrovillar adhesion complex/IMAC. This complex plays a central role in microvilli and epithelial brush border differentiation. The chain is Cadherin-related family member 5 from Homo sapiens (Human).